The primary structure comprises 150 residues: Large ribosomal subunit protein bL9 (150 aa).

The protein belongs to the bacterial ribosomal protein bL9 family.

In terms of biological role, binds to the 23S rRNA. The polypeptide is Large ribosomal subunit protein bL9 (Shewanella denitrificans (strain OS217 / ATCC BAA-1090 / DSM 15013)).